Consider the following 600-residue polypeptide: CoA ligase FVEG_12633 (600 aa).

ATP-binding positions include 170-174, histidine 214, 321-323, and 342-343; these read TSGTT, AAL, and ER. The interval 241 to 342 is SBD1; the sequence is NSVWTRLAAP…QLTGGNVLLE (102 aa). The SBD2 stretch occupies residues 343 to 420; sequence RYGMTEVGMA…LRGPTVFTGY (78 aa). Methionine 346 serves as a coordination point for substrate. ATP contacts are provided by threonine 347, aspartate 441, arginine 471, and lysine 564. An oxalate-binding site is contributed by lysine 564.

Belongs to the ATP-dependent AMP-binding enzyme family.

In terms of biological role, coA ligase; part of the Fusarium detoxification of benzoxazolinone cluster 2 (FDB2) involved in the degradation of benzoxazolinones produced by the host plant. Maize, wheat, and rye produce the 2 benzoxazinone phytoanticipins 2,4-dihy-droxy-7-methoxy-1,4-benzoxazin-3-one (DIMBOA) and 2,4-dihydroxy-1,4-benzoxazin-3-one (DIBOA) that, due to their inherent instability once released, spontaneously degrade to the more stable corresponding benzoxazolinones, 6-methoxy-2-benzoxazolinone (MBOA) and 2-benzoxazolinone (BOA), respectively. The first step in the detoxification of benzoxazolinones involves the hydrolysis of the cyclic ester bond of benzoxazolinones by the FDB1 cluster gamma-lactamase MBL1 to aminophenols. MBL1 is able to convert BOA into 2-aminophenol (2-AP), as well as MBOA into 5-methoxy-2-aminophenol (2-AMP). The FDB2 cluster N-malonyltransferase FDB2/NAT1 then metabolizes aminophenols via N-malonylation to non-toxic malonamic acids. FDB2/NAT1 converts 2-AP into N-(2-hydroxyphenyl) malonamic acid (HPMA) and 2-AMP into N-(2-hydroxy-4-methoxyphenyl) malonamic acid (HMPMA). The duplicated dienlactone hydrolases DLH1 and DLH2 may provide redundant function for hydrolyzing the lactone moiety in the BOA molecule. The roles of the amidases an other enzymes encoded by the 2 FDB clusters have not been identified so far. This Gibberella moniliformis (strain M3125 / FGSC 7600) (Maize ear and stalk rot fungus) protein is CoA ligase FVEG_12633.